A 562-amino-acid polypeptide reads, in one-letter code: Arginine--tRNA ligase (562 aa).

Residues 129 to 139 (ANPTGPLHVGH) carry the 'HIGH' region motif.

This sequence belongs to the class-I aminoacyl-tRNA synthetase family. As to quaternary structure, monomer.

It is found in the cytoplasm. It catalyses the reaction tRNA(Arg) + L-arginine + ATP = L-arginyl-tRNA(Arg) + AMP + diphosphate. In Xanthomonas campestris pv. campestris (strain B100), this protein is Arginine--tRNA ligase.